Consider the following 408-residue polypeptide: LL-diaminopimelate aminotransferase (408 aa).

The substrate site is built by tyrosine 15 and glycine 42. Pyridoxal 5'-phosphate-binding positions include tyrosine 72, 108 to 109 (SK), tyrosine 132, asparagine 187, tyrosine 218, and 246 to 248 (SFS). Substrate contacts are provided by lysine 109, tyrosine 132, and asparagine 187. N6-(pyridoxal phosphate)lysine is present on lysine 249. Pyridoxal 5'-phosphate contacts are provided by arginine 257 and asparagine 292. Substrate is bound by residues asparagine 292 and arginine 388.

The protein belongs to the class-I pyridoxal-phosphate-dependent aminotransferase family. LL-diaminopimelate aminotransferase subfamily. In terms of assembly, homodimer. Pyridoxal 5'-phosphate serves as cofactor.

It carries out the reaction (2S,6S)-2,6-diaminopimelate + 2-oxoglutarate = (S)-2,3,4,5-tetrahydrodipicolinate + L-glutamate + H2O + H(+). Its pathway is amino-acid biosynthesis; L-lysine biosynthesis via DAP pathway; LL-2,6-diaminopimelate from (S)-tetrahydrodipicolinate (aminotransferase route): step 1/1. Involved in the synthesis of meso-diaminopimelate (m-DAP or DL-DAP), required for both lysine and peptidoglycan biosynthesis. Catalyzes the direct conversion of tetrahydrodipicolinate to LL-diaminopimelate. This Prochlorococcus marinus (strain MIT 9313) protein is LL-diaminopimelate aminotransferase.